The primary structure comprises 314 residues: Secreted frizzled-related protein 1 (314 aa).

The first 31 residues, 1 to 31 (MGVGRSEGGRRGAALGVLLALGVALLAVGSA), serve as a signal peptide directing secretion. The region spanning 53–169 (TKPHQCVAIP…FPQDYVCIAM (117 aa)) is the FZ domain. 5 cysteine pairs are disulfide-bonded: C58–C121, C68–C114, C105–C140, C129–C166, and C133–C157. N173 carries an N-linked (GlcNAc...) asparagine glycan. Cystine bridges form between C186–C256, C189–C258, and C203–C306. Residues 186–306 (CPPCDNEMKS…FMKKVKAPDC (121 aa)) form the NTR domain.

It belongs to the secreted frizzled-related protein (sFRP) family.

It localises to the secreted. Soluble frizzled-related proteins (sFRPS) function as modulators of Wnt signaling through direct interaction with Wnts. They have a role in regulating cell growth and differentiation in specific cell types. This Gallus gallus (Chicken) protein is Secreted frizzled-related protein 1 (SFRP1).